Consider the following 104-residue polypeptide: 11 kDa late embryogenesis abundant protein (104 aa).

Residues 1–24 (MQSGKNAAASAKETAANVAASAKA) show a composition bias toward low complexity. The tract at residues 1–104 (MQSGKNAAAS…TGHRTGTGGI (104 aa)) is disordered. The span at 25–74 (GMEKTKASLQEKGEKMTAHDPMQKEMAREKKEERKHEAEYEKQAAKEHNA) shows a compositional bias: basic and acidic residues. Polar residues predominate over residues 75–89 (AQKQTTGIGTGTHSY).

Belongs to the LEA type 1 family. In terms of tissue distribution, maximally expressed in dry seeds. Also present in mid-maturation embryos.

In terms of biological role, LEA proteins are late embryonic proteins abundant in higher plant seed embryos. They may play an essential role in seed survival and in controlling water exchanges during seed desiccation and imbibition. In Helianthus annuus (Common sunflower), this protein is 11 kDa late embryogenesis abundant protein.